Here is a 24-residue protein sequence, read N- to C-terminus: FLPLLAGLAANFLPKIFCKITRKC.

Cys18 and Cys24 are disulfide-bonded.

Expressed by the skin glands.

Its subcellular location is the secreted. In terms of biological role, antimicrobial peptide. Stimulates insulin release by BRIN-BD11 cells in vitro. In Pelophylax saharicus (Sahara frog), this protein is Brevinin-1E.